The chain runs to 102 residues: Putative pterin-4-alpha-carbinolamine dehydratase (102 aa).

The protein belongs to the pterin-4-alpha-carbinolamine dehydratase family.

The enzyme catalyses (4aS,6R)-4a-hydroxy-L-erythro-5,6,7,8-tetrahydrobiopterin = (6R)-L-erythro-6,7-dihydrobiopterin + H2O. The sequence is that of Putative pterin-4-alpha-carbinolamine dehydratase from Burkholderia ambifaria (strain MC40-6).